The primary structure comprises 387 residues: 3-ketoacyl-CoA thiolase (387 aa).

The active-site Acyl-thioester intermediate is the cysteine 91. Residues histidine 343 and cysteine 373 each act as proton acceptor in the active site.

This sequence belongs to the thiolase-like superfamily. Thiolase family. In terms of assembly, heterotetramer of two alpha chains (FadB) and two beta chains (FadA).

The protein resides in the cytoplasm. The catalysed reaction is an acyl-CoA + acetyl-CoA = a 3-oxoacyl-CoA + CoA. The protein operates within lipid metabolism; fatty acid beta-oxidation. In terms of biological role, catalyzes the final step of fatty acid oxidation in which acetyl-CoA is released and the CoA ester of a fatty acid two carbons shorter is formed. This Shewanella sp. (strain MR-4) protein is 3-ketoacyl-CoA thiolase.